A 372-amino-acid polypeptide reads, in one-letter code: 4-hydroxybenzoate polyprenyltransferase, mitochondrial (372 aa).

Residues 1–42 constitute a mitochondrion transit peptide; the sequence is MFIWQRKSILLGRSILGSGRVTVAGIIGSSRKRYTSSSSSSS. Transmembrane regions (helical) follow at residues 92–112, 114–134, 171–191, 193–213, 229–249, 298–318, and 352–372; these read PVGT…GAMM, GATL…ALVM, ALVF…LLPA, CWWL…FKRF, ALLG…PLYL, IALL…GFIG, and TGLY…FGFL.

Belongs to the UbiA prenyltransferase family. It depends on Mg(2+) as a cofactor.

It localises to the mitochondrion inner membrane. The catalysed reaction is an all-trans-polyprenyl diphosphate + 4-hydroxybenzoate = a 4-hydroxy-3-(all-trans-polyprenyl)benzoate + diphosphate. It functions in the pathway cofactor biosynthesis; ubiquinone biosynthesis. Functionally, catalyzes the prenylation of para-hydroxybenzoate (PHB) with an all-trans polyprenyl group. Mediates the second step in the final reaction sequence of coenzyme Q (CoQ) biosynthesis, which is the condensation of the polyisoprenoid side chain with PHB, generating the first membrane-bound Q intermediate. The sequence is that of 4-hydroxybenzoate polyprenyltransferase, mitochondrial from Saccharomyces cerevisiae (strain ATCC 204508 / S288c) (Baker's yeast).